We begin with the raw amino-acid sequence, 1285 residues long: Peroxisomal ATPase PEX1 (1285 aa).

Positions 344–353 (QQGKTKQSVM) are enriched in polar residues. The disordered stretch occupies residues 344–373 (QQGKTKQSVMSPEKEKHPLESPNHKQIGSD). Serine 354 is subject to Phosphoserine. The span at 355–373 (PEKEKHPLESPNHKQIGSD) shows a compositional bias: basic and acidic residues. Residues 601 to 608 (GGKGSGKS) and 883 to 890 (GPPGTGKT) each bind ATP. Polar residues predominate over residues 1142–1161 (NGTSSDLSSQCPSAPSSVTQ). Residues 1142–1162 (NGTSSDLSSQCPSAPSSVTQD) form a disordered region. Phosphoserine occurs at positions 1183, 1211, and 1213. The tract at residues 1262–1285 (FQNPKKRKNPSGTVFRPGQKVTLA) is disordered.

Belongs to the AAA ATPase family. In terms of assembly, homooligomer; homooligomerizes in the cytosol, interaction with PEX6 promotes dissociation of the homooligomer. Interacts with PEX6; forming the PEX1-PEX6 AAA ATPase complex, which is composed of a heterohexamer formed by a trimer of PEX1-PEX6 dimers. Interacts indirectly with PEX26, via its interaction with PEX6.

The protein resides in the cytoplasm. It localises to the cytosol. Its subcellular location is the peroxisome membrane. The catalysed reaction is ATP + H2O = ADP + phosphate + H(+). Functionally, component of the PEX1-PEX6 AAA ATPase complex, a protein dislocase complex that mediates the ATP-dependent extraction of the PEX5 receptor from peroxisomal membranes, an essential step for PEX5 recycling. Specifically recognizes PEX5 monoubiquitinated at 'Cys-11', and pulls it out of the peroxisome lumen through the PEX2-PEX10-PEX12 retrotranslocation channel. Extraction by the PEX1-PEX6 AAA ATPase complex is accompanied by unfolding of the TPR repeats and release of bound cargo from PEX5. The chain is Peroxisomal ATPase PEX1 from Cricetulus griseus (Chinese hamster).